Reading from the N-terminus, the 1185-residue chain is 1-phosphatidylinositol 4,5-bisphosphate phosphodiesterase beta-2 (1185 aa).

The region spanning 312–463 (HDMTQPLNHY…LRGKILIKNK (152 aa)) is the PI-PLC X-box domain. H327 is a catalytic residue. Positions 328, 357, and 359 each coordinate Ca(2+). H374 is a catalytic residue. E408 contributes to the Ca(2+) binding site. The disordered stretch occupies residues 460–533 (IKNKKNQFSG…EEIKKMQSDE (74 aa)). Residues 465–476 (NQFSGPTSSSKD) show a composition bias toward polar residues. Residues 501–524 (EGTELEEEEVEEEEEEESGNLDEE) are compositionally biased toward acidic residues. The region spanning 546–662 (MSSLVNYIQP…GYLLKHEFMR (117 aa)) is the PI-PLC Y-box domain. The C2 domain occupies 662–790 (RRPDKQFNPF…CLHSESNMPL (129 aa)). Disordered regions lie at residues 859–888 (LAPTSNGSPAARAGAREEAMKEAAEPRTAS) and 943–979 (GACKLGPGKGSRKKRSLPREESAGAAPGEGPEGVDGR). The span at 872-888 (GAREEAMKEAAEPRTAS) shows a compositional bias: basic and acidic residues. S953 carries the phosphoserine modification. Residues 988–1147 (ELELLRQGEE…VKESVRACLR (160 aa)) are a coiled coil.

In terms of assembly, interacts with RAC1. Forms a complex composed of at least WDR26, a G-beta:gamma unit, and PLCB2. The cofactor is Ca(2+).

It catalyses the reaction a 1,2-diacyl-sn-glycero-3-phospho-(1D-myo-inositol-4,5-bisphosphate) + H2O = 1D-myo-inositol 1,4,5-trisphosphate + a 1,2-diacyl-sn-glycerol + H(+). The catalysed reaction is a 1,2-diacyl-sn-glycero-3-phospho-(1D-myo-inositol) + H2O = 1D-myo-inositol 1-phosphate + a 1,2-diacyl-sn-glycerol + H(+). Its function is as follows. The production of the second messenger molecules diacylglycerol (DAG) and inositol 1,4,5-trisphosphate (IP3) is mediated by activated phosphatidylinositol-specific phospholipase C enzymes. In neutrophils, participates in a phospholipase C-activating N-formyl peptide-activated GPCR (G protein-coupled receptor) signaling pathway by promoting RASGRP4 activation by DAG, to promote neutrophil functional responses. This is 1-phosphatidylinositol 4,5-bisphosphate phosphodiesterase beta-2 from Homo sapiens (Human).